The following is a 525-amino-acid chain: GMP synthase [glutamine-hydrolyzing] (525 aa).

The region spanning 13 to 202 is the Glutamine amidotransferase type-1 domain; that stretch reads TILVLDFGSQ…AVDLCHAKQN (190 aa). The active-site Nucleophile is Cys89. Active-site residues include His176 and Glu178. Residues 203–400 form the GMPS ATP-PPase domain; it reads WTMENFIDTE…LGIPHDLVWR (198 aa). 231 to 237 contributes to the ATP binding site; sequence SGGVDST. Lys241 participates in a covalent cross-link: Glycyl lysine isopeptide (Lys-Gly) (interchain with G-Cter in ubiquitin). Arg304 contacts XMP. Lys426 participates in a covalent cross-link: Glycyl lysine isopeptide (Lys-Gly) (interchain with G-Cter in ubiquitin). Residues Asp462, Lys517, and Glu523 each contribute to the XMP site.

As to quaternary structure, homodimer. The cofactor is Mg(2+).

The protein resides in the cytoplasm. It is found in the cytosol. It carries out the reaction XMP + L-glutamine + ATP + H2O = GMP + L-glutamate + AMP + diphosphate + 2 H(+). Its pathway is purine metabolism; GMP biosynthesis; GMP from XMP (L-Gln route): step 1/1. Functionally, catalyzes the conversion of xanthine monophosphate (XMP) to GMP in the presence of glutamine and ATP through an adenyl-XMP intermediate. The polypeptide is GMP synthase [glutamine-hydrolyzing] (Saccharomyces cerevisiae (strain ATCC 204508 / S288c) (Baker's yeast)).